Consider the following 1224-residue polypeptide: Tyrosine-protein kinase abl-1 (1224 aa).

One can recognise an SH3 domain in the interval 115–188 (SSAPLFVALY…PSNFIAPYNS (74 aa)). An SH2 domain is found at 194–284 (WYHGKISRSD…GLICLLMYPA (91 aa)). The 252-residue stretch at 311–562 (IIMHNKLGGG…PRFRDIHFNL (252 aa)) folds into the Protein kinase domain. ATP is bound by residues 317-325 (LGGGQYGDV), K340, and 385-391 (EFMCNGN). The active-site Proton acceptor is the D432. The Kinase activation loop signature appears at 450-474 (DFGLARFMKEDTYTAHAGAKFPIKW). Over residues 579-620 (LKKNNDKKLESDKRRSNVRERSDSKSRHSSHHDRDRDRESLH) the composition is skewed to basic and acidic residues. 5 disordered regions span residues 579–671 (LKKN…NTKP), 736–775 (KEST…STYV), 796–881 (KRSE…DVGM), 914–937 (LRHV…ATDN), and 968–1016 (RPFS…RSNG). 2 stretches are compositionally biased toward polar residues: residues 639–655 (SVSF…TSFR) and 746–760 (AGSS…NDSL). Composition is skewed to basic and acidic residues over residues 797–819 (RSET…KSEK) and 864–877 (PDSK…ETTK). Over residues 973 to 984 (QCPNNSTSSAIS) the composition is skewed to polar residues. The segment covering 1001-1016 (YEERMKPELPRKRSNG) has biased composition (basic and acidic residues).

This sequence belongs to the protein kinase superfamily. Tyr protein kinase family. ABL subfamily. Interacts (via SH2 and SH3 domains) with mig-13; the interaction is direct. May interact with soem-1.

The protein resides in the cell membrane. It is found in the cytoplasm. The enzyme catalyses L-tyrosyl-[protein] + ATP = O-phospho-L-tyrosyl-[protein] + ADP + H(+). Its function is as follows. Functions downstream of migratory protein mig-13 and is involved in Q neuroblast migration during larval development. Recruited by mig-13 to the leading edge of Q neuroblasts and their descendents to signal downstream, likely to the wve-1 pathway, and direct migration along the anteroposterior body axis. Promotes germline cell apoptosis in response to oxidative, osmotic and heat shock stresses. This is Tyrosine-protein kinase abl-1 (abl-1) from Caenorhabditis elegans.